The sequence spans 261 residues: uncharacterized protein (261 aa).

Belongs to the PaiB family.

This is an uncharacterized protein from Aspergillus fumigatus (strain ATCC MYA-4609 / CBS 101355 / FGSC A1100 / Af293) (Neosartorya fumigata).